The sequence spans 258 residues: Tegument protein VP22 (258 aa).

Residues 66–143 (VQPAARGRDR…RAPPGANAVA (78 aa)) are disordered. The span at 77–118 (AAAGTTVAAPAAAPARRSSSRASSRPPRAAADPPVLRPATRG) shows a compositional bias: low complexity. The Nuclear localization signal signature appears at 131-134 (PRPR). The Nuclear export signal motif lies at 204–216 (LDRMLKSAAIRIL). The interval 234 to 258 (RAQRPAARGSTSGGESRLRGERARP) is disordered. Basic and acidic residues predominate over residues 249-258 (SRLRGERARP).

This sequence belongs to the alphaherpesvirinae VP22 tegument protein family. In terms of assembly, interacts with gE (via C-terminus); this interaction is necessary for the recruitment of VP22 to the Golgi and its packaging into virions. Interacts with gM (via C-terminus). Interacts with VP16; this interaction allows the formation of a tripartite complex composed of VP16, VP22 and UL41/VHS. Interacts with the capsid-binding protein UL16. Interacts with host CGAS. Post-translationally, highly phosphorylated in the host cell. Packaging is selective for underphosphorylated forms.

Its subcellular location is the virion tegument. The protein resides in the host cytoplasm. It is found in the host nucleus. The protein localises to the host Golgi apparatus. Its function is as follows. Tegument protein that plays different roles during the time course of infection. Participates in both the accumulation of viral mRNAs and viral protein translation at late time of infection. Modulates the RNase activity of the virion host shutoff protein UL41 probably to ensure necessary levels of key cellular mRNAs and proteins. Plays a role in microtubule reorganization that occurs after viral infection by stabilizing microtubule network. Plays a role in the inhibition of host innate immune system by targeting the CGAS enzymatic activity which is the principal cytosolic DNA sensor that detects invading viral DNA. Acts by mediating disruption of liquid-like droplets in which CGAS is activated, thereby preventing CGAS activity. This is Tegument protein VP22 from Bovine herpesvirus 1.1 (strain Cooper) (BoHV-1).